We begin with the raw amino-acid sequence, 124 residues long: uncharacterized protein (124 aa).

Positions 1 to 21 are cleaved as a signal peptide; that stretch reads MFLLSLLHFFHPSLIPSLSLS.

This is an uncharacterized protein from Schizosaccharomyces pombe (strain 972 / ATCC 24843) (Fission yeast).